Here is a 425-residue protein sequence, read N- to C-terminus: tRNA(Ile)-lysidine synthase (425 aa).

Residue 27-32 coordinates ATP; sequence SGGLDS.

It belongs to the tRNA(Ile)-lysidine synthase family.

Its subcellular location is the cytoplasm. It catalyses the reaction cytidine(34) in tRNA(Ile2) + L-lysine + ATP = lysidine(34) in tRNA(Ile2) + AMP + diphosphate + H(+). In terms of biological role, ligates lysine onto the cytidine present at position 34 of the AUA codon-specific tRNA(Ile) that contains the anticodon CAU, in an ATP-dependent manner. Cytidine is converted to lysidine, thus changing the amino acid specificity of the tRNA from methionine to isoleucine. The chain is tRNA(Ile)-lysidine synthase from Streptococcus pneumoniae (strain P1031).